Reading from the N-terminus, the 201-residue chain is Small ribosomal subunit protein uS2 (201 aa).

This sequence belongs to the universal ribosomal protein uS2 family.

The protein is Small ribosomal subunit protein uS2 of Nanoarchaeum equitans (strain Kin4-M).